Reading from the N-terminus, the 297-residue chain is Cytidine deaminase (297 aa).

2 CMP/dCMP-type deaminase domains span residues 50-170 (SDKE…FGPK) and 189-297 (ETES…YASL). Position 91-93 (91-93 (NME)) interacts with substrate. Residue His-104 participates in Zn(2+) binding. The Proton donor role is filled by Glu-106. Positions 131 and 134 each coordinate Zn(2+).

This sequence belongs to the cytidine and deoxycytidylate deaminase family. As to quaternary structure, homodimer. The cofactor is Zn(2+).

The catalysed reaction is cytidine + H2O + H(+) = uridine + NH4(+). It catalyses the reaction 2'-deoxycytidine + H2O + H(+) = 2'-deoxyuridine + NH4(+). Its function is as follows. This enzyme scavenges exogenous and endogenous cytidine and 2'-deoxycytidine for UMP synthesis. This is Cytidine deaminase from Aliivibrio fischeri (strain ATCC 700601 / ES114) (Vibrio fischeri).